The following is a 354-amino-acid chain: Membrane progestin receptor alpha-B (354 aa).

At 1-76 (MATVVMEQIG…LTLFQRHNES (76 aa)) the chain is on the cytoplasmic side. Residues 77 to 97 (VNVWTHLLASLIILVKFQELS) form a helical membrane-spanning segment. Residues 98 to 110 (ETVDFLRDPHAQP) lie on the Extracellular side of the membrane. The chain crosses the membrane as a helical span at residues 111–131 (MFILLLAAFTYLGCSALAHLL). At 132–141 (SAKSEISHYT) the chain is on the cytoplasmic side. The chain crosses the membrane as a helical span at residues 142–162 (FYFLDYVGVAVYQYGSALAHF). Topologically, residues 163 to 175 (YYVVEEEWHAQVR) are extracellular. Residues 176-196 (TFFLPASAFLAWLSCTGCCYG) form a helical membrane-spanning segment. The Cytoplasmic portion of the chain corresponds to 197-244 (KYASPKLPKFVHKLFQVVPSGLAYCLDISPVLHRIYRCYSSEHWCADQ). A helical membrane pass occupies residues 245–265 (AVVYHCYQVLFFLISAYFFSY). At 266–277 (PHPERWFPGRCD) the chain is on the extracellular side. Residues 278–298 (FIGQGHQIFHVFLVLCTLVQI) traverse the membrane as a helical segment. At 299–318 (EAVRLDYTERRRLYEHLHGD) the chain is on the cytoplasmic side. Residues 319–339 (LAHDAVALFIFTACCSALTAF) traverse the membrane as a helical segment. At 340–354 (YVRKRVKTYLEEKQE) the chain is on the extracellular side.

Belongs to the ADIPOR family.

It is found in the cell membrane. In terms of biological role, steroid membrane receptor. Signals upon progestin binding, resulting in rapid activation of MAPK and down-regulation of adenylyl cyclase activity. Interacts with steroids with varying degrees of affinity, showing specificity for activation by the maturation-inducing steroid (MIS) 4-pregnen-17,20beta-diol-3-one (17,20beta-DHP). Capable of mediating progestin-induced oocyte maturation. This is Membrane progestin receptor alpha-B (paqr7b) from Danio rerio (Zebrafish).